Reading from the N-terminus, the 285-residue chain is Nucleotide-binding protein PFLU_0879 (285 aa).

8–15 (GRSGSGKS) lines the ATP pocket. 60–63 (DARN) is a GTP binding site.

This sequence belongs to the RapZ-like family.

Functionally, displays ATPase and GTPase activities. In Pseudomonas fluorescens (strain SBW25), this protein is Nucleotide-binding protein PFLU_0879.